A 180-amino-acid chain; its full sequence is Large ribosomal subunit protein uL5 (180 aa).

This sequence belongs to the universal ribosomal protein uL5 family. As to quaternary structure, part of the 50S ribosomal subunit; part of the 5S rRNA/L5/L18/L25 subcomplex. Contacts the 5S rRNA and the P site tRNA. Forms a bridge to the 30S subunit in the 70S ribosome.

Its function is as follows. This is one of the proteins that bind and probably mediate the attachment of the 5S RNA into the large ribosomal subunit, where it forms part of the central protuberance. In the 70S ribosome it contacts protein S13 of the 30S subunit (bridge B1b), connecting the 2 subunits; this bridge is implicated in subunit movement. Contacts the P site tRNA; the 5S rRNA and some of its associated proteins might help stabilize positioning of ribosome-bound tRNAs. This chain is Large ribosomal subunit protein uL5, found in Clostridium acetobutylicum (strain ATCC 824 / DSM 792 / JCM 1419 / IAM 19013 / LMG 5710 / NBRC 13948 / NRRL B-527 / VKM B-1787 / 2291 / W).